Here is a 105-residue protein sequence, read N- to C-terminus: MASEPNLRYPTEETGDRGPQGPPGPPGPQGPPGPQGPPGPQGPPGPQGPPGPQGPPGPQGPPGPPGPPGPSGLPGLFVTNLLLGIIILLLLIIVAILLVSKLVVN.

Residues 1–75 (MASEPNLRYP…GPPGPSGLPG (75 aa)) lie on the Cytoplasmic side of the membrane. The disordered stretch occupies residues 1-75 (MASEPNLRYP…GPPGPSGLPG (75 aa)). Residues 15 to 74 (GDRGPQGPPGPPGPQGPPGPQGPPGPQGPPGPQGPPGPQGPPGPQGPPGPPGPPGPSGLP) enclose the Collagen-like domain. Residues 20-71 (QGPPGPPGPQGPPGPQGPPGPQGPPGPQGPPGPQGPPGPQGPPGPPGPPGPS) show a composition bias toward pro residues. A helical membrane pass occupies residues 76–96 (LFVTNLLLGIIILLLLIIVAI). Topologically, residues 97–105 (LLVSKLVVN) are extracellular.

In terms of assembly, binds to host RAS and TRAF2.

It is found in the host membrane. Functionally, acts synergistically with Tip to stimulate NF-kappa-B activity and interleukin-2 gene expression by binding to host TRAF proteins. Activation of NF-kappa-B protects lymphocytes from apoptosis, thereby facilitating viral induced cell transformation. The protein is Saimiri transformation-associated protein of Saimiriine herpesvirus 2 (strain 484-77) (SaHV-2).